The chain runs to 600 residues: Elongation factor 4 (600 aa).

In terms of domain architecture, tr-type G spans 5–187 (KYIRNFSIIA…AIVNKLPPPK (183 aa)). GTP-binding positions include 17-22 (DHGKST) and 134-137 (NKID).

The protein belongs to the TRAFAC class translation factor GTPase superfamily. Classic translation factor GTPase family. LepA subfamily.

Its subcellular location is the cell inner membrane. The enzyme catalyses GTP + H2O = GDP + phosphate + H(+). Required for accurate and efficient protein synthesis under certain stress conditions. May act as a fidelity factor of the translation reaction, by catalyzing a one-codon backward translocation of tRNAs on improperly translocated ribosomes. Back-translocation proceeds from a post-translocation (POST) complex to a pre-translocation (PRE) complex, thus giving elongation factor G a second chance to translocate the tRNAs correctly. Binds to ribosomes in a GTP-dependent manner. The polypeptide is Elongation factor 4 (Rickettsia bellii (strain OSU 85-389)).